The primary structure comprises 434 residues: Histidinol dehydrogenase (434 aa).

Positions 129, 191, and 214 each coordinate NAD(+). Residues Ser240, Gln262, and His265 each coordinate substrate. Positions 262 and 265 each coordinate Zn(2+). Active-site proton acceptor residues include Glu329 and His330. Residues His330, Asp363, Glu417, and His422 each contribute to the substrate site. Asp363 provides a ligand contact to Zn(2+). Zn(2+) is bound at residue His422.

It belongs to the histidinol dehydrogenase family. It depends on Zn(2+) as a cofactor.

It carries out the reaction L-histidinol + 2 NAD(+) + H2O = L-histidine + 2 NADH + 3 H(+). The protein operates within amino-acid biosynthesis; L-histidine biosynthesis; L-histidine from 5-phospho-alpha-D-ribose 1-diphosphate: step 9/9. Its function is as follows. Catalyzes the sequential NAD-dependent oxidations of L-histidinol to L-histidinaldehyde and then to L-histidine. The polypeptide is Histidinol dehydrogenase (Colwellia psychrerythraea (strain 34H / ATCC BAA-681) (Vibrio psychroerythus)).